The primary structure comprises 82 residues: Small ribosomal subunit protein bS16 (82 aa).

Belongs to the bacterial ribosomal protein bS16 family.

This chain is Small ribosomal subunit protein bS16, found in Saccharophagus degradans (strain 2-40 / ATCC 43961 / DSM 17024).